We begin with the raw amino-acid sequence, 335 residues long: Mitochondrial thiamine diphosphate carrier 1 (335 aa).

6 consecutive transmembrane segments (helical) span residues 13–29 (KRAV…GAIS), 88–105 (VPAL…FAVL), 127–150 (YLSY…FDLL), 182–199 (LYAG…YAGL), 231–247 (SLSS…SGTV), and 304–323 (GIVP…FVAY). Solcar repeat units follow at residues 13–111 (KRAV…VKSF), 124–210 (LSPY…FKRW), and 232–329 (LSSF…ASDW).

It belongs to the mitochondrial carrier (TC 2.A.29) family.

It is found in the mitochondrion inner membrane. Mitochondrial transporter that mediates uptake of thiamine diphosphate (ThDP) into mitochondria. This chain is Mitochondrial thiamine diphosphate carrier 1, found in Arabidopsis thaliana (Mouse-ear cress).